Here is a 1220-residue protein sequence, read N- to C-terminus: Limbin (1220 aa).

The first 29 residues, 1 to 29, serve as a signal peptide directing secretion; the sequence is MGATGPTGAGGRATWVLAGNILAAALVLG. Residues 30–210 lie on the Extracellular side of the membrane; that stretch reads SGPRALPPSF…VLPNHGLHAA (181 aa). Residues 38–59 are disordered; it reads SFPALGPGSPSRPGPAGPWASS. N-linked (GlcNAc...) asparagine glycans are attached at residues N100, N109, and N130. Residues 211–231 traverse the membrane as a helical segment; the sequence is GFIAAFLISLLLTVAALFFLA. Residues 232–1220 are Cytoplasmic-facing; that stretch reads RGRCLQGGML…KKANRALGLD (989 aa). Coiled-coil stretches lie at residues 355–404, 563–644, 854–875, and 920–1005; these read EEYE…SAAE, KQKL…AALD, GELL…AESL, and QILE…VREE.

In terms of assembly, component of the EvC complex composed of EFCAB7, IQCE, EVC2 and EVC; built from two subcomplexes, EVC2:EVC and EFCAB7:IQCE. Interacts with EVC. Interacts (via N-terminal end) with EFCAB7. Interacts (via N-terminal end) with IQCE. Expressed in long and cranial bones, kidney and heart. Strongly expressed in proliferating chondrocytes, osteoblasts and osteoclasts.

The protein resides in the cell membrane. The protein localises to the cytoplasm. It localises to the cytoskeleton. It is found in the cilium basal body. Its subcellular location is the cell projection. The protein resides in the cilium. The protein localises to the cilium membrane. It localises to the nucleus. Its function is as follows. Component of the EvC complex that positively regulates ciliary Hedgehog (Hh) signaling. Plays a critical role in bone formation and skeletal development. May be involved in early embryonic morphogenesis. This chain is Limbin (Evc2), found in Mus musculus (Mouse).